The chain runs to 445 residues: Putative MgpC-like protein MPN_464 (445 aa).

The disordered stretch occupies residues Ser-23–Asn-44. Positions Ser-31–Asp-43 are enriched in low complexity.

The protein belongs to the MgpC family.

The protein is Putative MgpC-like protein MPN_464 of Mycoplasma pneumoniae (strain ATCC 29342 / M129 / Subtype 1) (Mycoplasmoides pneumoniae).